The sequence spans 3259 residues: MQKARGTRGEDAGTRAPPSPGVPPKRAKVGAGRGVLVTGAGAGAPVFLRPLKNAAVCAGSDVRLRVVVSGTPEPSLSWFRDGQLLPTPVPEPSCLWLRNCGAQDAGVYSCSAQNERGKASCEAVLTVLEVRDSETAEDDISDVPGTQRLELRDDRAFSTPTGGSDTLVGTSLDTPPTSVTGTSEEQVSWWGSGQTVLEQEAGSGGGTRPLPGSPRQAQTTGAGPRHLGVEPLVRASRANLVGASWGSEDSLSVASDLYGSAFSLYRGRALSIHVSIPPSGLRREEPDLQPQPASDALRPRPALPPPSKSALLPPPSPRVGKRALPGSSAQPPATPTSPHRCTQEPSLPEDITTTEEKRGKKPKSSGPSLAGTVESRPQTPLSEASGRLSALGRSPRLVRAGSRILDKLQFFEERRRSLERSDSPPAPLRPWVPLRKARSLEQPKSEGGAAWDTPGASQEELRSPRGSVAERRRLFQQKAASLDERTRQRSATSDLELRFAQELGRIRRSTSREELVRSHESLRATLQRAPSPREPGEPPLFSRPSIPKTSRAVSPAATQPPPPSGAGKSGDETGRPRSRGPVGRTEPGEGPQQEIKRRDQFPLTRSRAIQECRSPVPPFTADPPESRTKAPSARKREPPAQAVRFLPWATPGVEDSVLPQTLEKNRAGPEAEKRLRRGPEEDGPWGAWDRRGTRSQGKGRRARPTSPELESSDDSYVSAGEEPLEAPVFEIPLQNMVVAPGADVLLKCIITANPPPQVSWKKDGSVLHSEGRLLIRAEGERHTLLLREAQAADAGSYTATATNELGQASCASSLAVRPGASTSPFSSPITSDEEYLSPPEEFPEPGETWSRTPTMKPSPSQDRDSSDSSSKAPPTFKVSLMDQSVREGQDVIMSIRVQGEPKPVVSWLRNRQPVRPDQRRFAEEAEGGLCRLRILAAERGDAGFYTCKAVNEYGARQCEARLEVRAHPESRSLAVLAPLQDVDVGAGEMALFECLVAGPADVEVDWLCRGRLLQPALLKCKMHFDGRKCKLLLTSVHEDDSGVYTCKLSTVKDELTCSARLTVRPSLAPLFTRLLEDVEVLEGRAARLDCKISGTPPPSVTWTHFGHPVNESENLRLRQDGGLHSLHIARVGSEDEGLYEVSATNTHGQAHCSAQLYVEEPRTAASGPSSKLEKMPSIPEEPEHGDLERLSIPDFLRPLQDLEVGLAKEAMLECQVTGLPYPTISWFHNGHRIQSSDDRRMTQYRDIHRLVFPAVGPQHAGVYKSVIANKLGKAACYAHLYVTDVVPGPPDGAPQVVAVTGRMVTLSWNPPRSLDMAIDPDSLTYTVQHQVLGSDQWTALVTGLREPEWAATGLKKGLHHIFRVLSSSGKSSSKPSAPSEPVQLLEHGPPLEEAPAVLDKQDIVYVVEGQPACVTVTFNHVEAQVVWRSCRGALLEPRTGVYELSQPDDDQYCLRICRVSRRDLGPLTCSARNRHGTKACSITLELAEAPRFESIMEDVEVGPGETARFAVVVEGKPLPDIMWYKDEVLLAESNHVSFVYEENECSLVVLSAGSQDGGVYTCTARNLAGEVSCKAELSVHSAQTAMEVEGVGEDEEHRGRRLSDYYDIHQEIGRGAFSYLRRVVERSSGLEFAAKFIPSQAKPKASARREARLLARLQHDCVLYFHEAFERRRGLVIVTELCTEELLERMARKPTVCESETRTYMRQVLEGIGYLHQSHVLHLDVKPENLLVWDGAGGEEQVRICDFGNAQELTPGEPQYCQFGTPEFVAPEIVNQSPVSGVTDIWPVGVVAFLCLTGISPFVGENDRTTLMNIRNYNVAFEETTFLSLSREARGFLIKVLVQDRLRPTAEETLEHPWFKTEAKGAEVSTDHLKLFLSRRRWQRSQISYKCHLVLRPIPELLRAPPERVWVAMPRRQPPSGGLSSSSDSEEEELEELPSVPRPLQPEFSGSRVSLTDIPTEDEALGTPEAGAATPMDWQEQGRAPSKDQEAPSPEALPSPGQESPDGPSPRRPELRRGSSAESALPRVGSREPGRSLHKAASVELPQRRSPSPGATRLTRGGLGEGEYAQRLQALRQRLLRGGPEDGKVSGLRGPLLESLGGRARDPRMARAASSEAAPHHQPPPESRGLQKSSSFSQGEAEPRGRHRRAGAPLEIPVARLGARRLQESPSLSALSETQPPSPALPSAPKPSITKSPEPSAATSRDSPQPPAPQPVPEKIPEPKPEPVRAAKPAQPPLALQMPAQSLTPYAQIMQSLQLSSPTLSPQVPPSEPKPHAAVFARVASPPPGASEKRVPSARIPPVLAEKVRVPTVPPRPGSSLSGSIENLESEAVFEAKFKRSRESPLSRGLRLLSRSRSEERGPFRGAEDDGIYRPSPAGTPLELVRRPERSRSVQDLRVAGEPGLVRRLSLSLSQKLRRTPPGQRHPAWESRSGDGESSEGGSSARGSPVLAVRRRLSSTLERLSSRLQRSGSSEDSGGASGRSTPLFGRLRRATSEGESLRRLGVPHNQLASQTGATTPSAESLGSEASGTSGSSAPGESRSRHRWGLSRLRKDKGLSQPNLSASVQEDLGHQYVPSESDFPPVFHIKLKDQVLLEGEAATLLCLPAACPTPRISWMKDKQSLRSEPSVVIVSCKDGRQLLSIPRASKRHAGLYECSATNVLGSITSSCTVAVARTPGKLAPPEVPQTYCDTALVLWKPGDSRAPCTYTLERRVDGESVWHPVSSGIPDCYYNVTQLPVGVTVRFRVACSNRAGQGPFSNPSEKVFIRGTQDSPAQSAAAPRDAPVTSGPTRAPPPDSPTSLVPTPPLAPQVSQASTLSPSTSSMSANQALSSLKAVGPPPATPPRKHRGLLATQQAEPSPPSILVTPSEHKSFVPDTGTLTPTSSPQGVKPAPSSSSLYMVTSFVSAPPDPQPPAPEPPPEPTKVTVRSLSPAKEVVSSPTPESTTLRQGPPQKPYTFLEEKARGRFGVVRSCRENATGRTFVAKIVPYAAEGKRRVLQEYEVLRTLHHERLMSLHEAYITPRYLVLIAESCGNRELLCGLSDRFRYSEDDVATYVVQLLQGLDYLHGRHVLHLDIKPDNLLLAADNALKIVDFGSAQPYNPQALKPLGHRTGTLEFMAPEMVRGDPIGSATDIWGAGVLTYIMLSGYSPFYEPDPQETEARIVGGRFDAFQLYPNTSQSATLFLRKVLSVHPWSRPSLQDCLAHPWLQDAYLMKLRRQTLTFTTNRLKEFLGEQRRRRAEAATRHKVLLRSYPGSP.

Residues 1-30 (MQKARGTRGEDAGTRAPPSPGVPPKRAKVG) are disordered. At Arg-33 the chain carries Omega-N-methylarginine. Residues 45–126 (PVFLRPLKNA…GKASCEAVLT (82 aa)) enclose the Ig-like 1 domain. Ser-141 carries the post-translational modification Phosphoserine. 4 disordered regions span residues 155 to 185 (RAFSTPTGGSDTLVGTSLDTPPTSVTGTSEE), 198 to 226 (EQEAGSGGGTRPLPGSPRQAQTTGAGPRH), 278 to 716 (PSGL…DDSY), and 816 to 880 (VRPG…KVSL). Residues 158–185 (STPTGGSDTLVGTSLDTPPTSVTGTSEE) are compositionally biased toward polar residues. The segment covering 301-317 (PALPPPSKSALLPPPSP) has biased composition (pro residues). Residues Ser-368 and Ser-375 each carry the phosphoserine modification. Phosphothreonine is present on Thr-379. Phosphoserine is present on residues Ser-382 and Ser-385. Residues 404–422 (ILDKLQFFEERRRSLERSD) are compositionally biased toward basic and acidic residues. At Ser-423 the chain carries Phosphoserine. Residue Thr-453 is modified to Phosphothreonine. Phosphoserine is present on residues Ser-457, Ser-463, Ser-493, Ser-511, Ser-531, and Ser-554. The segment covering 459–473 (EELRSPRGSVAERRR) has biased composition (basic and acidic residues). The span at 510-522 (TSREELVRSHESL) shows a compositional bias: basic and acidic residues. 2 stretches are compositionally biased toward basic and acidic residues: residues 624–638 (PESRTKAPSARKREP) and 663–680 (EKNRAGPEAEKRLRRGPE). The 91-residue stretch at 727 to 817 (PVFEIPLQNM…ASCASSLAVR (91 aa)) folds into the Ig-like 2 domain. The span at 820–830 (ASTSPFSSPIT) shows a compositional bias: polar residues. 3 consecutive Ig-like domains span residues 874–963 (PTFK…ARLE), 968–1056 (PESR…DELT), and 1069–1157 (PLFT…AQLY). Cys-994 and Cys-1046 are disulfide-bonded. Residues Ser-1133 and Ser-1177 each carry the phosphoserine modification. A disordered region spans residues 1162–1185 (RTAASGPSSKLEKMPSIPEEPEHG). Positions 1193–1283 (PDFLRPLQDL…AACYAHLYVT (91 aa)) constitute an Ig-like 6 domain. The Fibronectin type-III 1 domain maps to 1290-1387 (PDGAPQVVAV…PSEPVQLLEH (98 aa)). Over residues 1367–1379 (SSGKSSSKPSAPS) the composition is skewed to low complexity. A disordered region spans residues 1367–1386 (SSGKSSSKPSAPSEPVQLLE). The 89-residue stretch at 1490–1578 (PRFESIMEDV…GEVSCKAELS (89 aa)) folds into the Ig-like 7 domain. The Protein kinase 1 domain maps to 1606 to 1859 (YDIHQEIGRG…AEETLEHPWF (254 aa)). Residues 1612–1620 (IGRGAFSYL) and Lys-1635 each bind ATP. Residue Asp-1724 is the Proton acceptor of the active site. 3 disordered regions span residues 1913–2244 (MPRR…QMPA), 2336–2451 (AKFK…SPVL), and 2463–2562 (RLSS…SQPN). Residues 1918–1927 (PPSGGLSSSS) show a composition bias toward low complexity. Phosphoserine occurs at positions 1993, 2004, 2019, 2020, and 2042. A compositionally biased stretch (basic and acidic residues) spans 2009–2019 (SPRRPELRRGS). An Asymmetric dimethylarginine; alternate modification is found at Arg-2060. An Omega-N-methylarginine; alternate modification is found at Arg-2060. The segment covering 2069–2081 (AQRLQALRQRLLR) has biased composition (low complexity). Phosphoserine is present on residues Ser-2114 and Ser-2135. Arg-2144 is modified (omega-N-methylarginine). The segment covering 2168–2179 (ESPSLSALSETQ) has biased composition (polar residues). Residues 2180–2189 (PPSPALPSAP) show a composition bias toward pro residues. Residues Ser-2182 and Ser-2207 each carry the phosphoserine modification. Residues 2193–2207 (ITKSPEPSAATSRDS) are compositionally biased toward polar residues. The span at 2208–2218 (PQPPAPQPVPE) shows a compositional bias: pro residues. Over residues 2219 to 2229 (KIPEPKPEPVR) the composition is skewed to basic and acidic residues. A compositionally biased stretch (low complexity) spans 2230-2244 (AAKPAQPPLALQMPA). Residues 2336-2345 (AKFKRSRESP) show a composition bias toward basic and acidic residues. Low complexity predominate over residues 2346-2355 (LSRGLRLLSR). Residues 2356–2372 (SRSEERGPFRGAEDDGI) are compositionally biased toward basic and acidic residues. Ser-2376 carries the post-translational modification Phosphoserine. Phosphothreonine is present on Thr-2380. Residues 2384–2395 (LVRRPERSRSVQ) are compositionally biased toward basic and acidic residues. Phosphoserine occurs at positions 2410, 2414, 2438, 2439, 2444, and 2448. The span at 2463–2484 (RLSSRLQRSGSSEDSGGASGRS) shows a compositional bias: low complexity. The segment covering 2510–2520 (QLASQTGATTP) has biased composition (polar residues). Phosphoserine is present on residues Ser-2521 and Ser-2524. The segment covering 2521 to 2540 (SAESLGSEASGTSGSSAPGE) has biased composition (low complexity). Positions 2543–2554 (SRHRWGLSRLRK) are enriched in basic residues. Ser-2559 is subject to Phosphoserine. One can recognise an Ig-like 8 domain in the interval 2583-2673 (PPVFHIKLKD…GSITSSCTVA (91 aa)). A disulfide bridge links Cys-2605 with Cys-2657. The region spanning 2680 to 2774 (KLAPPEVPQT…KVFIRGTQDS (95 aa)) is the Fibronectin type-III 2 domain. Residue Thr-2771 is modified to Phosphothreonine. Disordered regions lie at residues 2771 to 2829 (TQDS…MSAN) and 2855 to 2957 (TQQA…PQKP). The residue at position 2774 (Ser-2774) is a Phosphoserine. Over residues 2793–2810 (RAPPPDSPTSLVPTPPLA) the composition is skewed to pro residues. Residues 2814-2828 (SQASTLSPSTSSMSA) show a composition bias toward low complexity. The 107-residue stretch at 2859-2965 (EPSPPSILVT…KPYTFLEEKA (107 aa)) folds into the Fibronectin type-III 3 domain. Residues 2880-2907 (GTLTPTSSPQGVKPAPSSSSLYMVTSFV) show a composition bias toward polar residues. The span at 2910–2924 (PPDPQPPAPEPPPEP) shows a compositional bias: pro residues. Over residues 2940–2950 (SSPTPESTTLR) the composition is skewed to polar residues. Ser-2941 carries the post-translational modification Phosphoserine. Residues 2958-3210 (YTFLEEKARG…LQDCLAHPWL (253 aa)) enclose the Protein kinase 2 domain. Residues 2964–2972 (KARGRFGVV) and Lys-2987 each bind ATP. The Proton acceptor role is filled by Asp-3077.

It belongs to the protein kinase superfamily. CAMK Ser/Thr protein kinase family. Interacts with MTM1. Post-translationally, may be autophosphorylated. In terms of tissue distribution, isoform 2 is highly expressed in differentiated arterial smooth muscle cells (ASMC) in the medial layer of the aorta. Weakly detected in brain and testis and to a lesser extent in organs rich in striated muscle or visceral smooth muscle.

The protein localises to the nucleus. It carries out the reaction L-seryl-[protein] + ATP = O-phospho-L-seryl-[protein] + ADP + H(+). The catalysed reaction is L-threonyl-[protein] + ATP = O-phospho-L-threonyl-[protein] + ADP + H(+). Functionally, isoform 2 may have a role in regulating the growth and differentiation of arterial smooth muscle cells. This chain is Striated muscle-specific serine/threonine-protein kinase (Speg), found in Rattus norvegicus (Rat).